We begin with the raw amino-acid sequence, 260 residues long: Snake venom serine protease homolog 1 (260 aa).

The signal sequence occupies residues 1-18; the sequence is MVLIRVLANLLLLQLSYA. Residues 19–24 constitute a propeptide that is removed on maturation; that stretch reads QESSEL. A Peptidase S1 domain is found at 25-251; it reads VIGGDECDIN…YTDWIEGIIA (227 aa). 6 disulfide bridges follow: C31-C165, C52-C68, C100-C258, C144-C212, C176-C191, and C202-C227. The N-linked (GlcNAc...) asparagine glycan is linked to N253.

The protein belongs to the peptidase S1 family. Snake venom subfamily. In terms of tissue distribution, expressed by the venom gland.

The protein localises to the secreted. Its function is as follows. Snake venom serine protease homolog that may act in the hemostasis system of the prey. This is Snake venom serine protease homolog 1 from Bitis gabonica (Gaboon adder).